A 132-amino-acid polypeptide reads, in one-letter code: Small ribosomal subunit protein uS8c (132 aa).

The protein belongs to the universal ribosomal protein uS8 family. Part of the 30S ribosomal subunit.

The protein localises to the plastid. Its subcellular location is the chloroplast. Its function is as follows. One of the primary rRNA binding proteins, it binds directly to 16S rRNA central domain where it helps coordinate assembly of the platform of the 30S subunit. The polypeptide is Small ribosomal subunit protein uS8c (rps8) (Nymphaea alba (White water-lily)).